A 968-amino-acid polypeptide reads, in one-letter code: RNA polymerase-associated protein RapA (968 aa).

Residues 163–332 (EVGRRYAPRV…FARLRLLDPD (170 aa)) enclose the Helicase ATP-binding domain. Residue 176-183 (DEVGLGKT) coordinates ATP. The DEAH box signature appears at 278 to 281 (DEAH). The region spanning 491 to 643 (RVDWLIAFLK…ELTCPSGHVL (153 aa)) is the Helicase C-terminal domain.

It belongs to the SNF2/RAD54 helicase family. RapA subfamily. As to quaternary structure, interacts with the RNAP. Has a higher affinity for the core RNAP than for the holoenzyme. Its ATPase activity is stimulated by binding to RNAP.

Transcription regulator that activates transcription by stimulating RNA polymerase (RNAP) recycling in case of stress conditions such as supercoiled DNA or high salt concentrations. Probably acts by releasing the RNAP, when it is trapped or immobilized on tightly supercoiled DNA. Does not activate transcription on linear DNA. Probably not involved in DNA repair. The protein is RNA polymerase-associated protein RapA of Shewanella sp. (strain W3-18-1).